Here is a 698-residue protein sequence, read N- to C-terminus: Inner centromere protein SLI15 (698 aa).

Ser-268 carries the phosphoserine modification. 3 disordered regions span residues 365-390 (KNKI…FDKT), 405-444 (EQKK…EVKN), and 455-474 (RPTK…TSQT). Composition is skewed to polar residues over residues 422–439 (RPHS…SSPS) and 459–474 (ASIS…TSQT). Position 489 is a phosphoserine (Ser-489). Positions 535 to 560 (IMRSQQEHHRRKQEKQKRMSHLEQDL) are disordered. Basic and acidic residues predominate over residues 550-560 (QKRMSHLEQDL).

Belongs to the INCENP family. In terms of assembly, component of the CPC complex at least composed of IPL1, BIR1 and SLI15. Phosphorylated by serine/threonine protein kinase IPL1.

It localises to the nucleus. The protein localises to the cytoplasm. The protein resides in the cytoskeleton. Its subcellular location is the spindle. It is found in the chromosome. It localises to the centromere. The protein localises to the kinetochore. Component of the chromosomal passenger complex (CPC), a complex that acts as a key regulator of mitosis. Stimulates IPL1 kinase activity and facilitates its association with the mitotic spindle. Has a role in attaching the kinetochores to the microtubules and ensuring that sister kinetochores connect to opposite poles. This is Inner centromere protein SLI15 (SLI15) from Saccharomyces cerevisiae (strain ATCC 204508 / S288c) (Baker's yeast).